Consider the following 367-residue polypeptide: MVAVLTWALALLSAFATVQTQKGFWDYFSQSSGDKSKVARVQQQKLTWEPTSLKDSLEQDLSNMDKFLEKLGPLSGQGREPPGLPHDPEGMRQQLQEELAEVRARLEPYMAEAHQQVGWNLEGLRRQLKPYTVELMEQVARRVQELQEQLRVVGEGTKAQLLGGVDEARGLLQELQTRVVQHTGRVRELFHPYAQRLVTGIGRHVQELHRSVAPHAAASSARLSRCVQTLSRKLTLKAEALHARIQQNLGQLREELSAFASAGAGGAEEGANPDAQMLSQEVRQRLQAFRHDTFLQIADFTRAIDQETEEVQLQLAPPPPGHSAFAPEFLQADSSEARSKLQARLEDLWEDINDSLHDRGLSHLEEP.

The first 20 residues, 1–20, serve as a signal peptide directing secretion; it reads MVAVLTWALALLSAFATVQT. A Phosphoserine modification is found at Ser56. A disordered region spans residues 71–90; that stretch reads LGPLSGQGREPPGLPHDPEG.

The protein belongs to the apolipoprotein A1/A4/E family. As to quaternary structure, interacts with GPIHBP1. Interacts with SORL1; this interaction leads to APOA5 internalization and sorting either to lysosomes and degradation, or to the trans-Golgi network. Post-translationally, phosphorylated by FAM20C in the extracellular medium.

The protein localises to the secreted. It localises to the early endosome. Its subcellular location is the late endosome. It is found in the golgi apparatus. The protein resides in the trans-Golgi network. Functionally, minor apolipoprotein mainly associated with HDL and to a lesser extent with VLDL. May also be associated with chylomicrons. Important determinant of plasma triglyceride (TG) levels by both being a potent stimulator of apo-CII lipoprotein lipase (LPL) TG hydrolysis and an inhibitor of the hepatic VLDL-TG production rate (without affecting the VLDL-apoB production rate). Activates poorly lecithin:cholesterol acyltransferase (LCAT) and does not enhance efflux of cholesterol from macrophages. Binds heparin. In Neomonachus schauinslandi (Hawaiian monk seal), this protein is Apolipoprotein A-V (APOA5).